A 214-amino-acid polypeptide reads, in one-letter code: Thiamine-phosphate synthase (214 aa).

Residues glutamine 39 to lysine 43 and asparagine 71 each bind 4-amino-2-methyl-5-(diphosphooxymethyl)pyrimidine. The Mg(2+) site is built by aspartate 72 and aspartate 91. Serine 110 lines the 4-amino-2-methyl-5-(diphosphooxymethyl)pyrimidine pocket. 2-[(2R,5Z)-2-carboxy-4-methylthiazol-5(2H)-ylidene]ethyl phosphate is bound at residue threonine 136–threonine 138. Lysine 139 contributes to the 4-amino-2-methyl-5-(diphosphooxymethyl)pyrimidine binding site. 2-[(2R,5Z)-2-carboxy-4-methylthiazol-5(2H)-ylidene]ethyl phosphate-binding positions include glycine 166 and valine 186–serine 187.

The protein belongs to the thiamine-phosphate synthase family. Requires Mg(2+) as cofactor.

The catalysed reaction is 2-[(2R,5Z)-2-carboxy-4-methylthiazol-5(2H)-ylidene]ethyl phosphate + 4-amino-2-methyl-5-(diphosphooxymethyl)pyrimidine + 2 H(+) = thiamine phosphate + CO2 + diphosphate. It catalyses the reaction 2-(2-carboxy-4-methylthiazol-5-yl)ethyl phosphate + 4-amino-2-methyl-5-(diphosphooxymethyl)pyrimidine + 2 H(+) = thiamine phosphate + CO2 + diphosphate. It carries out the reaction 4-methyl-5-(2-phosphooxyethyl)-thiazole + 4-amino-2-methyl-5-(diphosphooxymethyl)pyrimidine + H(+) = thiamine phosphate + diphosphate. It participates in cofactor biosynthesis; thiamine diphosphate biosynthesis; thiamine phosphate from 4-amino-2-methyl-5-diphosphomethylpyrimidine and 4-methyl-5-(2-phosphoethyl)-thiazole: step 1/1. In terms of biological role, condenses 4-methyl-5-(beta-hydroxyethyl)thiazole monophosphate (THZ-P) and 2-methyl-4-amino-5-hydroxymethyl pyrimidine pyrophosphate (HMP-PP) to form thiamine monophosphate (TMP). The protein is Thiamine-phosphate synthase of Hydrogenobaculum sp. (strain Y04AAS1).